The following is a 145-amino-acid chain: MKALLQRVGAARVEVGGEIVGSIDRGLLVLVGVEPEDGERCAAKMLHKLLNYRVFGDAEGKMNRSLADVQGGLLLVSQFTLAANTRSGLRPSFSSAAPPAQGEAVFEHLVKLARVAHPQVATGRFGADMQVHLVNDGPVTFLLEC.

Residues 137-138 carry the Gly-cisPro motif, important for rejection of L-amino acids motif; that stretch reads GP.

It belongs to the DTD family. Homodimer.

It is found in the cytoplasm. The enzyme catalyses glycyl-tRNA(Ala) + H2O = tRNA(Ala) + glycine + H(+). The catalysed reaction is a D-aminoacyl-tRNA + H2O = a tRNA + a D-alpha-amino acid + H(+). Functionally, an aminoacyl-tRNA editing enzyme that deacylates mischarged D-aminoacyl-tRNAs. Also deacylates mischarged glycyl-tRNA(Ala), protecting cells against glycine mischarging by AlaRS. Acts via tRNA-based rather than protein-based catalysis; rejects L-amino acids rather than detecting D-amino acids in the active site. By recycling D-aminoacyl-tRNA to D-amino acids and free tRNA molecules, this enzyme counteracts the toxicity associated with the formation of D-aminoacyl-tRNA entities in vivo and helps enforce protein L-homochirality. This Pseudomonas paraeruginosa (strain DSM 24068 / PA7) (Pseudomonas aeruginosa (strain PA7)) protein is D-aminoacyl-tRNA deacylase.